The chain runs to 236 residues: Ubiquinone biosynthesis O-methyltransferase (236 aa).

4 residues coordinate S-adenosyl-L-methionine: Arg-39, Gly-59, Asp-80, and Met-124.

This sequence belongs to the methyltransferase superfamily. UbiG/COQ3 family.

The catalysed reaction is a 3-demethylubiquinol + S-adenosyl-L-methionine = a ubiquinol + S-adenosyl-L-homocysteine + H(+). It carries out the reaction a 3-(all-trans-polyprenyl)benzene-1,2-diol + S-adenosyl-L-methionine = a 2-methoxy-6-(all-trans-polyprenyl)phenol + S-adenosyl-L-homocysteine + H(+). The protein operates within cofactor biosynthesis; ubiquinone biosynthesis. Functionally, O-methyltransferase that catalyzes the 2 O-methylation steps in the ubiquinone biosynthetic pathway. This is Ubiquinone biosynthesis O-methyltransferase from Shewanella pealeana (strain ATCC 700345 / ANG-SQ1).